Consider the following 166-residue polypeptide: Large ribosomal subunit protein uL10 (166 aa).

It belongs to the universal ribosomal protein uL10 family. As to quaternary structure, part of the ribosomal stalk of the 50S ribosomal subunit. The N-terminus interacts with L11 and the large rRNA to form the base of the stalk. The C-terminus forms an elongated spine to which L12 dimers bind in a sequential fashion forming a multimeric L10(L12)X complex.

In terms of biological role, forms part of the ribosomal stalk, playing a central role in the interaction of the ribosome with GTP-bound translation factors. This chain is Large ribosomal subunit protein uL10, found in Streptococcus agalactiae serotype V (strain ATCC BAA-611 / 2603 V/R).